The following is a 147-amino-acid chain: Catabolic 3-dehydroquinase 2 (147 aa).

Tyrosine 23 serves as the catalytic Proton acceptor. The substrate site is built by asparagine 74, histidine 80, and aspartate 87. Histidine 100 (proton donor) is an active-site residue. Residues 101-102 and arginine 111 each bind substrate; that span reads IT.

It belongs to the type-II 3-dehydroquinase family. Homododecamer. Adopts a ring-like structure, composed of an arrangement of two hexameric rings stacked on top of one another.

It carries out the reaction 3-dehydroquinate = 3-dehydroshikimate + H2O. The protein operates within aromatic compound metabolism; 3,4-dihydroxybenzoate biosynthesis; 3,4-dihydroxybenzoate from 3-dehydroquinate: step 1/2. Its function is as follows. Is involved in the catabolism of quinate. Allows the utilization of quinate as carbon source via the beta-ketoadipate pathway. The sequence is that of Catabolic 3-dehydroquinase 2 from Aspergillus terreus (strain NIH 2624 / FGSC A1156).